The primary structure comprises 355 residues: Syntaxin-5 (355 aa).

Over 1–333 the chain is Cytoplasmic; the sequence is MIPRKRYGSK…KYFQSVTSNR (333 aa). Positions 245 to 247 match the IxM motif; signal for cargo packaging into COPII-coated vesicles motif; that stretch reads IDM. One can recognise a t-SNARE coiled-coil homology domain in the interval 263 to 325; the sequence is DSYIQSRADT…EAAHSEILKY (63 aa). Residues 287–318 adopt a coiled-coil conformation; the sequence is FQQLAHMVKEQEETIQRIDENVLGAQLDVEAA. Residues 334–354 traverse the membrane as a helical; Anchor for type IV membrane protein segment; that stretch reads WLMVKIFLILIVFFIIFVVFL. A355 is a topological domain (vesicular).

Belongs to the syntaxin family. In terms of assembly, part of a ternary complex containing STX5A, NSFL1C and VCP. Part of a unique SNARE complex composed of the Golgi SNAREs GOSR1, GOSR2, YKT6 and VTI1A. Component of a SNARE complex consisting of STX5, YKT6, GOSR1 and BET1L. Interacts with BET1L. Interacts with BET1. Interacts with COG4. Interacts with GM130/GOLGA2. Interacts (via IxM motif) with SEC24C and SEC24D; mediates STX5 packaging into COPII-coated vesicles. Interacts with VLDLR; this interaction mediates VLDLR translocation from the endoplasmic reticulum to the plasma membrane.

It localises to the endoplasmic reticulum-Golgi intermediate compartment membrane. The protein localises to the golgi apparatus membrane. Mediates endoplasmic reticulum to Golgi transport. Together with p115/USO1 and GM130/GOLGA2, involved in vesicle tethering and fusion at the cis-Golgi membrane to maintain the stacked and inter-connected structure of the Golgi apparatus. Functionally, required for Golgi to endoplasmic reticulum retrogade transport, and for intra-Golgi transport. This chain is Syntaxin-5 (Stx5), found in Mus musculus (Mouse).